Consider the following 668-residue polypeptide: Kelch repeat-containing protein ARB_01230 (668 aa).

The N-terminal stretch at 1–32 (MEVGRFASKSASMTYLLLVLLVGFILPQQGQH) is a signal peptide. At 33–522 (AHARTLARRD…GSGSDGPNIA (490 aa)) the chain is on the extracellular side. N-linked (GlcNAc...) asparagine glycosylation occurs at N60. 2 Kelch repeats span residues 62–108 (TLYI…PRGD) and 125–176 (SLFL…ANIP). N-linked (GlcNAc...) asparagine glycans are attached at residues N251 and N291. Kelch repeat units follow at residues 283–331 (ILGL…AVAA), 340–395 (QVYL…IWNS), 396–445 (QIVV…ASQT), and 463–509 (VQSV…GPHA). The chain crosses the membrane as a helical span at residues 523-543 (AIVAGVIAGCLGVLAIYLGFV). Residues 544–668 (TWLYRRRLAI…PRQTLRVINQ (125 aa)) are Cytoplasmic-facing. A disordered region spans residues 611-642 (DNQRHNHTRSSSGGNFDHLAQPERPSTSSSVE).

Its subcellular location is the membrane. It is found in the secreted. The protein is Kelch repeat-containing protein ARB_01230 of Arthroderma benhamiae (strain ATCC MYA-4681 / CBS 112371) (Trichophyton mentagrophytes).